Here is a 1487-residue protein sequence, read N- to C-terminus: Major viral transcription factor ICP4 homolog (1487 aa).

Disordered regions lie at residues alanine 41–glycine 295, leucine 310–alanine 370, and proline 803–arginine 1007. Residues valine 66–glutamate 75 are compositionally biased toward pro residues. Composition is skewed to low complexity over residues proline 165–serine 193 and aspartate 201–serine 213. The span at aspartate 214 to glutamate 224 shows a compositional bias: acidic residues. Positions alanine 235 to glycine 272 are enriched in low complexity. Residues alanine 273 to serine 285 are compositionally biased toward pro residues. Composition is skewed to low complexity over residues serine 807–serine 829, proline 849–glutamine 860, and alanine 867–glutamine 877. Positions threonine 878–arginine 893 are enriched in polar residues. A compositionally biased stretch (basic residues) spans histidine 920–lysine 929. Residues alanine 938 to alanine 951 are compositionally biased toward low complexity. Residues glycine 988 to arginine 1007 show a composition bias toward basic and acidic residues.

Belongs to the herpesviridae ICP4 family. Post-translationally, a long stretch of serine residues may be a major site of phosphorylation.

Its subcellular location is the host nucleus. Functionally, this IE protein is a multifunctional protein capable of migrating to the nucleus, binding to DNA, trans-activating other viral genes, and autoregulating its own synthesis. In Equus caballus (Horse), this protein is Major viral transcription factor ICP4 homolog (IE).